We begin with the raw amino-acid sequence, 734 residues long: MALRFPRFSQGLAQDPTTRRIWFGIATAHDFESHDDITEERLYQNIFASHFGQLAIIFLWTSGNLFHVAWQGNFETWIQDPLHVRPIAHAIWDPHFGQPAVEAFTRGGALGPVNIAYSGVYQWWYTIGLRTNEDLYTGALFLLFLSALSLIGGWLHLQPKWKPRVSWFKNAESRLNHHLSGLFGVSSLAWTGHLVHVAIPASRGEYVRWNNFLNVLPHPQGLGPLFTGQWNLYAQNPDSSSHLFGTSQGSGTAILTLLGGFHPQTQSLWLTDMAHHHLAIAILFLIAGHMYRTNFGIGHSIKDLLEAHIPPGGRLGRGHKGLYDTINNSIHFQLGLALASLGVITSLVAQHMYSLPAYAFIAQDFTTQAALYTHHQYIAGFIMTGAFAHGAIFFIRDYNPEQNEDNVLARMLDHKEAIISQLSWASLFLGFHTLGLYVHNDVMLAFGTSEKQILIEPIFAQWIQSAHGKTSYGFDVLLSSTNGPAFNAGRSIWLPGWLNAINENSNSLFLTIGPGDFLVHHAIALGLHTTTLILVKGALDARGSKLMPDKKDFGYSFPCDGPGRGGTCDISAWDAFYLAVFWMLNTIGWVTFYWHWKHITLWQGNVSQFNESSTYLMGWLRDYLWLNSSQLINGYNPFGMNSLSVWAWMFLFGHLVWATGFMFLISWRGYWQELIETLAWAHERTPLANLIRWKDKPVALSIVQARLVGLAHFSVGYIFTYAAFLIASTSGKFG.

8 helical membrane-spanning segments follow: residues 46 to 69 (IFAS…FHVA), 135 to 158 (LYTG…LHLQ), 175 to 199 (LNHH…HVAI), 273 to 291 (MAHH…GHMY), 330 to 353 (IHFQ…QHMY), 369 to 395 (AALY…IFFI), 417 to 439 (AIIS…LYVH), and 517 to 535 (FLVH…LILV). [4Fe-4S] cluster-binding residues include Cys-559 and Cys-568. The next 2 membrane-spanning stretches (helical) occupy residues 575–596 (AFYL…YWHW) and 643–665 (LSVW…MFLI). Chlorophyll a-binding residues include His-654, Met-662, and Tyr-670. Trp-671 is a binding site for phylloquinone. A helical transmembrane segment spans residues 707-727 (LVGLAHFSVGYIFTYAAFLIA).

This sequence belongs to the PsaA/PsaB family. The PsaA/B heterodimer binds the P700 chlorophyll special pair and subsequent electron acceptors. PSI consists of a core antenna complex that captures photons, and an electron transfer chain that converts photonic excitation into a charge separation. The eukaryotic PSI reaction center is composed of at least 11 subunits. The cofactor is P700 is a chlorophyll a/chlorophyll a' dimer, A0 is one or more chlorophyll a, A1 is one or both phylloquinones and FX is a shared 4Fe-4S iron-sulfur center..

It is found in the plastid. It localises to the chloroplast thylakoid membrane. It carries out the reaction reduced [plastocyanin] + hnu + oxidized [2Fe-2S]-[ferredoxin] = oxidized [plastocyanin] + reduced [2Fe-2S]-[ferredoxin]. Its function is as follows. PsaA and PsaB bind P700, the primary electron donor of photosystem I (PSI), as well as the electron acceptors A0, A1 and FX. PSI is a plastocyanin-ferredoxin oxidoreductase, converting photonic excitation into a charge separation, which transfers an electron from the donor P700 chlorophyll pair to the spectroscopically characterized acceptors A0, A1, FX, FA and FB in turn. Oxidized P700 is reduced on the lumenal side of the thylakoid membrane by plastocyanin. The polypeptide is Photosystem I P700 chlorophyll a apoprotein A2 (Draba nemorosa (Woodland whitlowgrass)).